Consider the following 319-residue polypeptide: Ferrochelatase (319 aa).

His-192 and Glu-271 together coordinate Fe cation.

The protein belongs to the ferrochelatase family.

The protein resides in the cytoplasm. It catalyses the reaction heme b + 2 H(+) = protoporphyrin IX + Fe(2+). The protein operates within porphyrin-containing compound metabolism; protoheme biosynthesis; protoheme from protoporphyrin-IX: step 1/1. Its function is as follows. Catalyzes the ferrous insertion into protoporphyrin IX. This chain is Ferrochelatase, found in Geotalea uraniireducens (strain Rf4) (Geobacter uraniireducens).